A 229-amino-acid chain; its full sequence is Prolactin (229 aa).

Positions 1 to 30 (MSNRGASLKGLFLAVLLVSNTLLTKEGVTS) are cleaved as a signal peptide. 3 disulfides stabilise this stretch: Cys34–Cys41, Cys88–Cys204, and Cys221–Cys229.

This sequence belongs to the somatotropin/prolactin family.

The protein localises to the secreted. The chain is Prolactin (PRL) from Gallus gallus (Chicken).